Reading from the N-terminus, the 238-residue chain is Ribonuclease PH (238 aa).

Phosphate-binding positions include Arg86 and 124–126 (GTR).

The protein belongs to the RNase PH family. In terms of assembly, homohexameric ring arranged as a trimer of dimers.

The enzyme catalyses tRNA(n+1) + phosphate = tRNA(n) + a ribonucleoside 5'-diphosphate. Its function is as follows. Phosphorolytic 3'-5' exoribonuclease that plays an important role in tRNA 3'-end maturation. Removes nucleotide residues following the 3'-CCA terminus of tRNAs; can also add nucleotides to the ends of RNA molecules by using nucleoside diphosphates as substrates, but this may not be physiologically important. Probably plays a role in initiation of 16S rRNA degradation (leading to ribosome degradation) during starvation. The protein is Ribonuclease PH of Psychrobacter cryohalolentis (strain ATCC BAA-1226 / DSM 17306 / VKM B-2378 / K5).